The primary structure comprises 71 residues: MKEKNIEMQGTVIDTLPNTTFKVELENKHIVIAHISGKMRKNYIRILTGDKVTLELTPYDLSKGRIIFRSR.

One can recognise an S1-like domain in the interval 1-71 (MKEKNIEMQG…SKGRIIFRSR (71 aa)).

The protein belongs to the IF-1 family. As to quaternary structure, component of the 30S ribosomal translation pre-initiation complex which assembles on the 30S ribosome in the order IF-2 and IF-3, IF-1 and N-formylmethionyl-tRNA(fMet); mRNA recruitment can occur at any time during PIC assembly.

The protein localises to the cytoplasm. In terms of biological role, one of the essential components for the initiation of protein synthesis. Stabilizes the binding of IF-2 and IF-3 on the 30S subunit to which N-formylmethionyl-tRNA(fMet) subsequently binds. Helps modulate mRNA selection, yielding the 30S pre-initiation complex (PIC). Upon addition of the 50S ribosomal subunit IF-1, IF-2 and IF-3 are released leaving the mature 70S translation initiation complex. This is Translation initiation factor IF-1 from Buchnera aphidicola subsp. Cinara cedri (strain Cc).